We begin with the raw amino-acid sequence, 214 residues long: MIRRGLLSVTAALVLLSVSCSAQETMGCADRTAINDFNATLYMGKWYEYAKMGSMPYEEGGVCVTAEYSMSSNNITVVNSMKDNTTHEVNTTTGWAEFASELHTDGKLSVHFPNSPSVGNYWILSTDYDNYSIVWSCVKRPDSAASTEISWILLRSRNSSNMTLERVEDELKNLQLDLNKYTKTEQSAKYCAGAEHVVGAMLSVAIASLFALLH.

The first 21 residues, 1–21 (MIRRGLLSVTAALVLLSVSCS), serve as a signal peptide directing secretion. N-linked (GlcNAc...) asparagine glycosylation is found at Asn-38, Asn-74, Asn-84, Asn-90, Asn-130, Asn-158, and Asn-161. Ala-192 carries GPI-anchor amidated alanine lipidation. Positions 193–214 (GAEHVVGAMLSVAIASLFALLH) are cleaved as a propeptide — removed in mature form.

The protein belongs to the calycin superfamily. Lipocalin family. Post-translationally, N-glycosylated. Contains disulfide bonds. In terms of tissue distribution, expressed by a subset of neuroblasts, ganglion mother cells and neurons of the CNS; by all sensory neurons of the PNS.

The protein resides in the cell membrane. Its function is as follows. Putative role in axonal outgrowth and guidance, required for the navigation of identified commissural neurons. Could be a receptor the midline morphogen. This Schistocerca americana (American grasshopper) protein is Lazarillo protein.